A 269-amino-acid chain; its full sequence is Hydroxyethylthiazole kinase (269 aa).

M42 provides a ligand contact to substrate. Positions 118 and 164 each coordinate ATP. G191 lines the substrate pocket.

It belongs to the Thz kinase family. The cofactor is Mg(2+).

The catalysed reaction is 5-(2-hydroxyethyl)-4-methylthiazole + ATP = 4-methyl-5-(2-phosphooxyethyl)-thiazole + ADP + H(+). It participates in cofactor biosynthesis; thiamine diphosphate biosynthesis; 4-methyl-5-(2-phosphoethyl)-thiazole from 5-(2-hydroxyethyl)-4-methylthiazole: step 1/1. Functionally, catalyzes the phosphorylation of the hydroxyl group of 4-methyl-5-beta-hydroxyethylthiazole (THZ). The polypeptide is Hydroxyethylthiazole kinase (Listeria monocytogenes serovar 1/2a (strain ATCC BAA-679 / EGD-e)).